Here is a 275-residue protein sequence, read N- to C-terminus: 3',5'-cyclic adenosine monophosphate phosphodiesterase CpdA (275 aa).

The Fe cation site is built by Asp-22, His-24, Asp-64, Asn-94, His-164, His-203, and His-205. Residues His-24, Asp-64, and 94-95 each bind AMP; that span reads NH. Residue His-205 coordinates AMP.

It belongs to the cyclic nucleotide phosphodiesterase class-III family. Fe(2+) serves as cofactor.

The catalysed reaction is 3',5'-cyclic AMP + H2O = AMP + H(+). In terms of biological role, hydrolyzes cAMP to 5'-AMP. Plays an important regulatory role in modulating the intracellular concentration of cAMP, thereby influencing cAMP-dependent processes. This is 3',5'-cyclic adenosine monophosphate phosphodiesterase CpdA from Escherichia coli O157:H7.